Consider the following 158-residue polypeptide: Xanthine-guanine phosphoribosyltransferase (158 aa).

5-phospho-alpha-D-ribose 1-diphosphate is bound by residues arginine 38 to glycine 39 and aspartate 90 to threonine 98. Aspartate 91 contributes to the Mg(2+) binding site. Positions 94 and 137 each coordinate guanine. Xanthine is bound by residues aspartate 94 and isoleucine 137. Residues aspartate 94–threonine 98 and tryptophan 136–isoleucine 137 each bind GMP.

It belongs to the purine/pyrimidine phosphoribosyltransferase family. XGPT subfamily. In terms of assembly, homotetramer. Requires Mg(2+) as cofactor.

Its subcellular location is the cell inner membrane. The catalysed reaction is GMP + diphosphate = guanine + 5-phospho-alpha-D-ribose 1-diphosphate. It carries out the reaction XMP + diphosphate = xanthine + 5-phospho-alpha-D-ribose 1-diphosphate. The enzyme catalyses IMP + diphosphate = hypoxanthine + 5-phospho-alpha-D-ribose 1-diphosphate. The protein operates within purine metabolism; GMP biosynthesis via salvage pathway; GMP from guanine: step 1/1. It participates in purine metabolism; XMP biosynthesis via salvage pathway; XMP from xanthine: step 1/1. In terms of biological role, purine salvage pathway enzyme that catalyzes the transfer of the ribosyl-5-phosphate group from 5-phospho-alpha-D-ribose 1-diphosphate (PRPP) to the N9 position of the 6-oxopurines guanine and xanthine to form the corresponding ribonucleotides GMP (guanosine 5'-monophosphate) and XMP (xanthosine 5'-monophosphate), with the release of PPi. To a lesser extent, also acts on hypoxanthine. The protein is Xanthine-guanine phosphoribosyltransferase of Buchnera aphidicola subsp. Acyrthosiphon pisum (strain APS) (Acyrthosiphon pisum symbiotic bacterium).